The primary structure comprises 317 residues: Biotin synthase (317 aa).

The region spanning 42–260 (NRIQLSTLLS…IAVTRLCMPK (219 aa)) is the Radical SAM core domain. Residues Cys57, Cys61, and Cys64 each contribute to the [4Fe-4S] cluster site. [2Fe-2S] cluster is bound by residues Cys101, Cys132, Cys192, and Arg264.

Belongs to the radical SAM superfamily. Biotin synthase family. Homodimer. It depends on [4Fe-4S] cluster as a cofactor. [2Fe-2S] cluster serves as cofactor.

The enzyme catalyses (4R,5S)-dethiobiotin + (sulfur carrier)-SH + 2 reduced [2Fe-2S]-[ferredoxin] + 2 S-adenosyl-L-methionine = (sulfur carrier)-H + biotin + 2 5'-deoxyadenosine + 2 L-methionine + 2 oxidized [2Fe-2S]-[ferredoxin]. It functions in the pathway cofactor biosynthesis; biotin biosynthesis; biotin from 7,8-diaminononanoate: step 2/2. Its function is as follows. Catalyzes the conversion of dethiobiotin (DTB) to biotin by the insertion of a sulfur atom into dethiobiotin via a radical-based mechanism. This is Biotin synthase from Thiobacillus denitrificans (strain ATCC 25259 / T1).